Consider the following 100-residue polypeptide: Urease subunit gamma (100 aa).

The protein belongs to the urease gamma subunit family. In terms of assembly, heterotrimer of UreA (gamma), UreB (beta) and UreC (alpha) subunits. Three heterotrimers associate to form the active enzyme.

It is found in the cytoplasm. The catalysed reaction is urea + 2 H2O + H(+) = hydrogencarbonate + 2 NH4(+). It functions in the pathway nitrogen metabolism; urea degradation; CO(2) and NH(3) from urea (urease route): step 1/1. The chain is Urease subunit gamma from Pseudomonas aeruginosa (strain UCBPP-PA14).